We begin with the raw amino-acid sequence, 597 residues long: MVLSNKKLKQRIRQDLAESLSVSVSETNPQSQSLKLLLDSSSHKPRLSKREKRRNCETFAREDDEIRENEVGNGGSSEKTDTKIKKKRKRDDAVEVDELEGDEGTKEEQKPQKKKNKKKKKKRKVNKTPKKAEEGNVEEKVKVEEIEVNTDNKEEDGVVPNKLYVGGIPYQSTEDEIRSYFRSCGVIIKVDCKMRPEDGAFSGIAFITFDTEDGAKRALAFDRAAMGDRYLTIQQYVKTTTPSIPRRKTSSGFAPEMVDGYNRVYIGNLAWDTTERDIRKLFSDCVINSVRLGKNKETGEFKGYAHVDFKDSVSVAIALKLDQQVICGRPVKICCALKDRPATDHTPGETNNAGSYNMEDTYAAADPVPALAGRSEVDDGNYFATTVSSSKVKRRVCYECGEKGHLSTACPIKLQKADDQANSKLGQETVDGRPAMQSYGLPKNSGDSYYMNETYASTNETYNGGYSASAVGTGKVKRRNCYECGEKGHLSTACPIKLQNTSHTNSTLDHQTVEAGPTQVTSYSLQKKTRDTENNGGSFMDESYATVPISIDVTNGANDASLTSAVSTGKIKKRNCYECGEKGHLSSACPNKLQKQG.

The interval 18–136 (ESLSVSVSET…KTPKKAEEGN (119 aa)) is disordered. The span at 20–29 (LSVSVSETNP) shows a compositional bias: polar residues. The span at 30-40 (QSQSLKLLLDS) shows a compositional bias: low complexity. Composition is skewed to basic residues over residues 43–53 (HKPRLSKREKR) and 112–129 (QKKKNKKKKKKRKVNKTP). The Nuclear localization signal signature appears at 112–119 (QKKKNKKK). RRM domains lie at 161 to 238 (NKLY…QYVK) and 262 to 338 (NRVY…CALK). 3 consecutive CCHC-type zinc fingers follow at residues 397 to 411 (CYECGEKGHLSTACP), 481 to 495 (CYECGEKGHLSTACP), and 576 to 591 (CYECGEKGHLSSACPN).

As to quaternary structure, interacts with phragmoplastins (e.g. DRP1A, DRP1B, DRP1C, DRP1D and DRP1E) and with GTP-bound ARAC11/ROP1 as well as with Ran2 transcripts.

The protein resides in the nucleus. The protein localises to the cell membrane. Its subcellular location is the cytoplasm. It localises to the cytoskeleton. It is found in the phragmoplast. Functionally, RNA-binding protein which mediates polarized mRNA (e.g. Ran2 transcripts mRNA) transport from the nucleus to the vicinity of the cell plate during cytokinesis and phragmoplast formation. The protein is Phragmoplastin interacting protein 1 of Arabidopsis thaliana (Mouse-ear cress).